Reading from the N-terminus, the 198-residue chain is Holliday junction resolvase RecU (198 aa).

A disordered region spans residues 1 to 22 (MVNYPHKLSSQKRQTSLSQPKN). Positions 11–22 (QKRQTSLSQPKN) are enriched in polar residues. Residues threonine 81, aspartate 83, glutamate 96, and glutamine 115 each coordinate Mg(2+).

Belongs to the RecU family. Requires Mg(2+) as cofactor.

It localises to the cytoplasm. It carries out the reaction Endonucleolytic cleavage at a junction such as a reciprocal single-stranded crossover between two homologous DNA duplexes (Holliday junction).. Its function is as follows. Endonuclease that resolves Holliday junction intermediates in genetic recombination. Cleaves mobile four-strand junctions by introducing symmetrical nicks in paired strands. Promotes annealing of linear ssDNA with homologous dsDNA. Required for DNA repair, homologous recombination and chromosome segregation. The protein is Holliday junction resolvase RecU of Streptococcus pneumoniae (strain Hungary19A-6).